A 775-amino-acid polypeptide reads, in one-letter code: Venom dipeptidyl peptidase 4 (775 aa).

The N-terminal stretch at 1-23 is a signal peptide; that stretch reads MEVLVQLALLLVVHGSLVVLVAG. Residues N68 and N239 are each glycosylated (N-linked (GlcNAc...) asparagine). 2 disulfide bridges follow: C450–C453 and C463–C481. N-linked (GlcNAc...) asparagine glycans are attached at residues N473, N505, N578, and N631. The active-site Charge relay system is the S639. C659 and C770 form a disulfide bridge. 2 N-linked (GlcNAc...) asparagine glycosylation sites follow: N689 and N694. Catalysis depends on charge relay system residues D718 and H750.

This sequence belongs to the peptidase S9B family. DPPIV subfamily. As to expression, expressed by the venom duct.

It localises to the secreted. The catalysed reaction is Release of an N-terminal dipeptide, Xaa-Yaa-|-Zaa-, from a polypeptide, preferentially when Yaa is Pro, provided Zaa is neither Pro nor hydroxyproline.. Inhibited by diprotin A. Functionally, venom dipeptidyl-peptidase which removes N-terminal dipeptides sequentially from polypeptides having unsubstituted N-termini provided that the penultimate residue is proline. May process promelittin into its active form and/or modulate the chemotactic activity of immune cells after the insect sting. The sequence is that of Venom dipeptidyl peptidase 4 from Apis mellifera (Honeybee).